Reading from the N-terminus, the 660-residue chain is Putative ABC transporter ATP-binding MG390 (660 aa).

In terms of domain architecture, Peptidase C39 spans 6–126 (QEQQNECGIC…KLWTGYAATV (121 aa)). The active site involves Cys12. The next 6 helical transmembrane spans lie at 150-170 (LVTF…LLAT), 188-208 (LVVL…LQVI), 265-285 (YIPN…LIGI), 290-310 (FLLI…YDFF), 379-399 (SFFQ…GIIE), and 402-422 (YQLS…TYAT). The ABC transporter domain occupies 464 to 657 (ISLENLSVTL…QNKINLTNYL (194 aa)). ATP is bound at residue 494-501 (GQNGSGKS).

Belongs to the ABC transporter superfamily.

The protein localises to the cell membrane. The chain is Putative ABC transporter ATP-binding MG390 from Mycoplasma genitalium (strain ATCC 33530 / DSM 19775 / NCTC 10195 / G37) (Mycoplasmoides genitalium).